A 288-amino-acid chain; its full sequence is Signal recognition particle receptor FtsY (288 aa).

GTP contacts are provided by residues 93 to 100 (GINGTGKT), 175 to 179 (DTAGR), and 233 to 236 (TKLD).

This sequence belongs to the GTP-binding SRP family. FtsY subfamily. As to quaternary structure, part of the signal recognition particle protein translocation system, which is composed of SRP and FtsY.

It is found in the cell membrane. The protein localises to the cytoplasm. It catalyses the reaction GTP + H2O = GDP + phosphate + H(+). In terms of biological role, involved in targeting and insertion of nascent membrane proteins into the cytoplasmic membrane. Acts as a receptor for the complex formed by the signal recognition particle (SRP) and the ribosome-nascent chain (RNC). In Thermoplasma acidophilum (strain ATCC 25905 / DSM 1728 / JCM 9062 / NBRC 15155 / AMRC-C165), this protein is Signal recognition particle receptor FtsY.